The primary structure comprises 341 residues: UDP-N-acetylenolpyruvoylglucosamine reductase (341 aa).

Residues methionine 19–arginine 191 form the FAD-binding PCMH-type domain. The active site involves arginine 167. Residue serine 241 is the Proton donor of the active site. Glutamate 337 is an active-site residue.

This sequence belongs to the MurB family. It depends on FAD as a cofactor.

It is found in the cytoplasm. It carries out the reaction UDP-N-acetyl-alpha-D-muramate + NADP(+) = UDP-N-acetyl-3-O-(1-carboxyvinyl)-alpha-D-glucosamine + NADPH + H(+). The protein operates within cell wall biogenesis; peptidoglycan biosynthesis. Cell wall formation. This is UDP-N-acetylenolpyruvoylglucosamine reductase from Chromobacterium violaceum (strain ATCC 12472 / DSM 30191 / JCM 1249 / CCUG 213 / NBRC 12614 / NCIMB 9131 / NCTC 9757 / MK).